We begin with the raw amino-acid sequence, 151 residues long: MATSPMLFLVSLLLVLVAAATGDEASPSNAAAPAAPVLVGGRTEIRDVGSNKAVQSLGRFAVAEHNRRLRHGGSGGPADPVPVKLAFARVVEAQKQVVSGVAYYLKVAASARDPRGGAAAGGDRVFDAVVVVKAWLKSKELVSFTPASSTK.

The signal sequence occupies residues 1 to 22; the sequence is MATSPMLFLVSLLLVLVAAATG. A Cystatin domain is found at 40 to 109; it reads GGRTEIRDVG…GVAYYLKVAA (70 aa). The short motif at 96–100 is the Secondary area of contact element; sequence QVVSG.

The protein belongs to the cystatin family. Phytocystatin subfamily.

The protein resides in the secreted. In terms of biological role, specific inhibitor of cysteine proteinases. Probably involved in the regulation of endogenous processes and in defense against pests and pathogens. The polypeptide is Cysteine proteinase inhibitor 10 (Oryza sativa subsp. indica (Rice)).